Reading from the N-terminus, the 190-residue chain is Anthranilate synthase component II (190 aa).

The 190-residue stretch at 1–190 (MILIIDNYDS…ENFCTGIAKA (190 aa)) folds into the Glutamine amidotransferase type-1 domain. 51 to 53 (GPG) serves as a coordination point for L-glutamine. The Nucleophile; for GATase activity role is filled by Cys-76. Residues Gln-80 and 126–127 (SL) contribute to the L-glutamine site. Catalysis depends on residues His-167 and Glu-169.

As to quaternary structure, tetramer of two components I and two components II.

The enzyme catalyses chorismate + L-glutamine = anthranilate + pyruvate + L-glutamate + H(+). Its pathway is amino-acid biosynthesis; L-tryptophan biosynthesis; L-tryptophan from chorismate: step 1/5. This is Anthranilate synthase component II (trpG2) from Haloarcula marismortui (strain ATCC 43049 / DSM 3752 / JCM 8966 / VKM B-1809) (Halobacterium marismortui).